We begin with the raw amino-acid sequence, 1022 residues long: Polyamine-modulated factor 1-binding protein 1 (1022 aa).

Coiled-coil stretches lie at residues 89–121, 169–281, 312–377, 411–732, and 758–968; these read NKQY…LQAS, EKLH…ACSN, SEDC…LREE, LKKD…SAIQ, and QDDL…KAGN. 2 stretches are compositionally biased toward basic and acidic residues: residues 545–556 and 571–582; these read QKESSKIEEERK and EGQRRLSNAEKE. A disordered region spans residues 545–582; it reads QKESSKIEEERKHNRQRLQELSSELSEGQRRLSNAEKE.

In terms of tissue distribution, expressed in the testis.

Its subcellular location is the cell projection. The protein resides in the cilium. It is found in the flagellum. Required for normal spermatogenesis. It functions as a scaffold protein that attaches the sperm head-tail connecting piece to the nuclear envelope, thus maintaining sperm head and tail integrity. May also be involved in the general organization of cellular cytoskeleton. The protein is Polyamine-modulated factor 1-binding protein 1 (Pmfbp1) of Mus musculus (Mouse).